The sequence spans 383 residues: Chaperone protein DnaJ (383 aa).

Residues 5–69 (DYYDILGVSK…QKRAQYDQFG (65 aa)) form the J domain. A CR-type zinc finger spans residues 138 to 222 (GKTTTIKYDR…CHGAGHVHER (85 aa)). Zn(2+)-binding residues include Cys151, Cys154, Cys168, Cys171, Cys194, Cys197, Cys210, and Cys213. CXXCXGXG motif repeat units lie at residues 151-158 (CKTCHGTG), 168-175 (CPRCHGAG), 194-201 (CPECNGTG), and 210-217 (CDTCHGAG).

The protein belongs to the DnaJ family. Homodimer. Zn(2+) serves as cofactor.

It is found in the cytoplasm. In terms of biological role, participates actively in the response to hyperosmotic and heat shock by preventing the aggregation of stress-denatured proteins and by disaggregating proteins, also in an autonomous, DnaK-independent fashion. Unfolded proteins bind initially to DnaJ; upon interaction with the DnaJ-bound protein, DnaK hydrolyzes its bound ATP, resulting in the formation of a stable complex. GrpE releases ADP from DnaK; ATP binding to DnaK triggers the release of the substrate protein, thus completing the reaction cycle. Several rounds of ATP-dependent interactions between DnaJ, DnaK and GrpE are required for fully efficient folding. Also involved, together with DnaK and GrpE, in the DNA replication of plasmids through activation of initiation proteins. This chain is Chaperone protein DnaJ, found in Limosilactobacillus reuteri (strain DSM 20016) (Lactobacillus reuteri).